A 1085-amino-acid chain; its full sequence is DNA mismatch repair protein MutS (1085 aa).

Positions 533–564 (DEDLFGEEEQNAPPVGSSNHAVGTQPSADDEA) are disordered. Residues 548–559 (GSSNHAVGTQPS) show a composition bias toward polar residues. 812–819 (GPNMSGKS) contacts ATP. The tract at residues 997 to 1042 (ERRAPRSAPPTVPARGDDRRSAGRASSSGAGAARGEQGRTLPDGQL) is disordered. The segment covering 1019–1031 (GRASSSGAGAARG) has biased composition (low complexity).

It belongs to the DNA mismatch repair MutS family.

Functionally, this protein is involved in the repair of mismatches in DNA. It is possible that it carries out the mismatch recognition step. This protein has a weak ATPase activity. This Roseiflexus sp. (strain RS-1) protein is DNA mismatch repair protein MutS.